The following is a 131-amino-acid chain: Bacteriohemerythrin (131 aa).

Residues His20, Glu23, His56, Glu60, His75, His79, His117, and Asp122 each coordinate Fe cation.

This sequence belongs to the hemerythrin family. As to quaternary structure, monomer.

Its function is as follows. Oxygen-binding protein. May be involved in a storage mechanism or for delivery to oxygen-requiring enzymes. The oxygen-binding site contains two iron atoms. This chain is Bacteriohemerythrin, found in Aquifex aeolicus (strain VF5).